The sequence spans 489 residues: Metal cation symporter ZIP14 (489 aa).

The signal sequence occupies residues 1-28; it reads MKRLHPALPSCLLLVLFGIWRTAPQTHA. Residues 29 to 155 lie on the Extracellular side of the membrane; that stretch reads SSAGLPPLSA…PSAIEVWGYG (127 aa). Residues Asn52, Asn75, Asn85, and Asn100 are each glycosylated (N-linked (GlcNAc...) asparagine). Residues 156 to 176 traverse the membrane as a helical segment; it reads FLCVTVISLCSLMGASVVPFM. The Cytoplasmic portion of the chain corresponds to 177 to 184; sequence KKTFYKRL. A helical transmembrane segment spans residues 185 to 205; sequence LLYFIALAIGTLYSNALFQLI. Residues 206 to 221 lie on the Extracellular side of the membrane; the sequence is PEAFGFNPQDNYVSKS. Residues 222-242 traverse the membrane as a helical segment; that stretch reads AVVFGGFYLFFFTEKILKMLL. Residues 243–349 lie on the Cytoplasmic side of the membrane; the sequence is KQKNEHHHGH…SDGLHNFIDG (107 aa). The short motif at 248 to 255 is the HHHGHXHX-motif element; that stretch reads HHHGHNHF. The helical transmembrane segment at 350-370 threads the bilayer; it reads LAIGASFTVSVFQGISTSVAI. Topologically, residues 371-394 are extracellular; the sequence is LCEEFPHELGDFVILLNAGMSIQQ. An XEXPHE-motif motif is present at residues 373-378; that stretch reads EEFPHE. A helical transmembrane segment spans residues 395–415; that stretch reads ALFFNFLSACCCYLGLAFGIL. Residues 416-421 are Cytoplasmic-facing; sequence AGSHFS. The chain crosses the membrane as a helical span at residues 422-442; that stretch reads ANWIFALAGGMFLYIALADMF. The Extracellular segment spans residues 443-457; that stretch reads PEMNEVCQEDEKNDS. The chain crosses the membrane as a helical span at residues 458–478; the sequence is FLVPFVIQNLGLLTGFSIMLV. Over 479-489 the chain is Cytoplasmic; the sequence is LTMYSGQIQIG.

The protein belongs to the ZIP transporter (TC 2.A.5) family. Homotrimer. In terms of processing, ubiquitinated. Ubiquitination occurs upon iron depletion. The ubiquitinated form undergoes proteasomal degradation. Post-translationally, N-glycosylated. N-glycosylation at Asn-100 is required for iron-regulated extraction of the transporter from membranes and subsequent proteasomal degradation. As to expression, widely expressed. Highly and transiently expressed during the early stage of adipocyte differentiation. Strongly expressed in liver, preadipocyte, duodenum and jejunum, moderately in brain, heart, skeletal muscle, spleen, pancreas, kidney and white adipose cells. Expression is almost undetectable in lung, testis and brown adipose cells. Expressed by chondrocytes and pituitary cells. More strongly expressed in brain. In terms of tissue distribution, more strongly expressed in liver, kidney and duodenum.

The protein localises to the cell membrane. The protein resides in the apical cell membrane. Its subcellular location is the basolateral cell membrane. It localises to the early endosome membrane. It is found in the late endosome membrane. The protein localises to the lysosome membrane. It catalyses the reaction Zn(2+)(out) + 2 hydrogencarbonate(out) = Zn(2+)(in) + 2 hydrogencarbonate(in). The enzyme catalyses Mn(2+)(out) + 2 hydrogencarbonate(out) = Mn(2+)(in) + 2 hydrogencarbonate(in). The catalysed reaction is Fe(2+)(out) + 2 hydrogencarbonate(out) = Fe(2+)(in) + 2 hydrogencarbonate(in). It carries out the reaction Cd(2+)(out) + 2 hydrogencarbonate(out) = Cd(2+)(in) + 2 hydrogencarbonate(in). Inhibited by cyanide and therefore dependent of an energy source. Inhibited by DIDS/4,4'-diisothiocyanatostilbene-2,2'-disulfonic acid, an inhibitor hydrogencarbonate-dependent transporters. Electroneutral transporter of the plasma membrane mediating the cellular uptake of the divalent metal cations zinc, manganese and iron that are important for tissue homeostasis, metabolism, development and immunity. Functions as an energy-dependent symporter, transporting through the membranes an electroneutral complex composed of a divalent metal cation and two bicarbonate anions. Beside these endogenous cellular substrates, can also import cadmium a non-essential metal which is cytotoxic and carcinogenic. Controls the cellular uptake by the intestinal epithelium of systemic zinc, which is in turn required to maintain tight junctions and the intestinal permeability. Modifies the activity of zinc-dependent phosphodiesterases, thereby indirectly regulating G protein-coupled receptor signaling pathways important for gluconeogenesis and chondrocyte differentiation. Regulates insulin receptor signaling, glucose uptake, glycogen synthesis and gluconeogenesis in hepatocytes through the zinc-dependent intracellular catabolism of insulin. Through zinc cellular uptake also plays a role in the adaptation of cells to endoplasmic reticulum stress. Major manganese transporter of the basolateral membrane of intestinal epithelial cells, it plays a central role in manganese systemic homeostasis through intestinal manganese uptake. Also involved in manganese extracellular uptake by cells of the blood-brain barrier. May also play a role in manganese and zinc homeostasis participating in their elimination from the blood through the hepatobiliary excretion. Also functions in the extracellular uptake of free iron. May also function intracellularly and mediate the transport from endosomes to cytosol of iron endocytosed by transferrin. Plays a role in innate immunity by regulating the expression of cytokines by activated macrophages. The chain is Metal cation symporter ZIP14 from Mus musculus (Mouse).